A 256-amino-acid chain; its full sequence is Small ribosomal subunit protein eS1 (256 aa).

A2 is modified (N-acetylalanine; partial).

Belongs to the eukaryotic ribosomal protein eS1 family. Component of the small ribosomal subunit. Mature ribosomes consist of a small (40S) and a large (60S) subunit. The 40S subunit contains about 33 different proteins and 1 molecule of RNA (18S). The 60S subunit contains about 49 different proteins and 3 molecules of RNA (25S, 5.8S and 5S).

The protein resides in the cytoplasm. The chain is Small ribosomal subunit protein eS1 from Fusarium vanettenii (strain ATCC MYA-4622 / CBS 123669 / FGSC 9596 / NRRL 45880 / 77-13-4) (Fusarium solani subsp. pisi).